The following is a 198-amino-acid chain: Nascent polypeptide-associated complex subunit alpha (198 aa).

The 66-residue stretch at Ile48 to Ser113 folds into the NAC-A/B domain. Residues Leu159–Lys198 form the UBA domain.

Belongs to the NAC-alpha family. In terms of assembly, part of the nascent polypeptide-associated complex (NAC), consisting of EGD2 and EGD1. NAC associates with ribosomes via EGD1.

The protein localises to the cytoplasm. Its subcellular location is the nucleus. In terms of biological role, component of the nascent polypeptide-associated complex (NAC), a dynamic component of the ribosomal exit tunnel, protecting the emerging polypeptides from interaction with other cytoplasmic proteins to ensure appropriate nascent protein targeting. The NAC complex also promotes mitochondrial protein import by enhancing productive ribosome interactions with the outer mitochondrial membrane and blocks the inappropriate interaction of ribosomes translating non-secretory nascent polypeptides with translocation sites in the membrane of the endoplasmic reticulum. EGD2 may also be involved in transcription regulation. The sequence is that of Nascent polypeptide-associated complex subunit alpha (EGD2) from Yarrowia lipolytica (strain CLIB 122 / E 150) (Yeast).